A 124-amino-acid chain; its full sequence is Profilin-2 (124 aa).

Belongs to the profilin family. Occurs in many kinds of cells as a complex with monomeric actin in a 1:1 ratio. Interacts with forH.

It localises to the cytoplasm. It is found in the cytoskeleton. Functionally, binds to actin and affects the structure of the cytoskeleton. At high concentrations, profilin prevents the polymerization of actin, whereas it enhances it at low concentrations. By binding to PIP2, it inhibits the formation of IP3 and DG. The protein is Profilin-2 (proB) of Dictyostelium discoideum (Social amoeba).